We begin with the raw amino-acid sequence, 227 residues long: 2-C-methyl-D-erythritol 4-phosphate cytidylyltransferase (227 aa).

This sequence belongs to the IspD/TarI cytidylyltransferase family. IspD subfamily.

The enzyme catalyses 2-C-methyl-D-erythritol 4-phosphate + CTP + H(+) = 4-CDP-2-C-methyl-D-erythritol + diphosphate. Its pathway is isoprenoid biosynthesis; isopentenyl diphosphate biosynthesis via DXP pathway; isopentenyl diphosphate from 1-deoxy-D-xylulose 5-phosphate: step 2/6. In terms of biological role, catalyzes the formation of 4-diphosphocytidyl-2-C-methyl-D-erythritol from CTP and 2-C-methyl-D-erythritol 4-phosphate (MEP). The sequence is that of 2-C-methyl-D-erythritol 4-phosphate cytidylyltransferase from Bordetella bronchiseptica (strain ATCC BAA-588 / NCTC 13252 / RB50) (Alcaligenes bronchisepticus).